Reading from the N-terminus, the 480-residue chain is MNFETVIGLEVHVELNTNSKIFSPTSAHFGNDQNANTNVIDWSFPGVLPVLNKGVVDAGIKAALALNMDLHKKMHFDRKNYFYPDNPKAYQISQFDEPIGYNGWIEVELEDGTTKKIGIERAHLEEDAGKNTHGTDGYSYVDLNRQGVPLIEIVSEADMRSPEEAYAYLTALKEVIQYAGISDVKMEEGSMRVDANISLRPYGQEKFGTKTELKNLNSFSNVRKGLEYEVQRQAEILRSGGQIRQETRRYDEANKTTILMRVKEGAADYRYFPEPDLPLFEISDEWIEEMRTELPEFPKERRARYVSDLGLSDYDASQLTANKVTSDFFEKAVALGGDAKQVSNWLQGEVAQFLNAEGKTLEQIELTPENLVEMIAIIEDGTISSKIAKKVFVHLAKNGGGAREYVEKAGMVQISDPAILIPIIHQVFADNEAAVADFKSGKRNADKAFTGFLMKATKGQANPQVALKLLAQELAKLKEN.

Belongs to the GatB/GatE family. GatB subfamily. In terms of assembly, heterotrimer of A, B and C subunits.

It catalyses the reaction L-glutamyl-tRNA(Gln) + L-glutamine + ATP + H2O = L-glutaminyl-tRNA(Gln) + L-glutamate + ADP + phosphate + H(+). The catalysed reaction is L-aspartyl-tRNA(Asn) + L-glutamine + ATP + H2O = L-asparaginyl-tRNA(Asn) + L-glutamate + ADP + phosphate + 2 H(+). Allows the formation of correctly charged Asn-tRNA(Asn) or Gln-tRNA(Gln) through the transamidation of misacylated Asp-tRNA(Asn) or Glu-tRNA(Gln) in organisms which lack either or both of asparaginyl-tRNA or glutaminyl-tRNA synthetases. The reaction takes place in the presence of glutamine and ATP through an activated phospho-Asp-tRNA(Asn) or phospho-Glu-tRNA(Gln). This Streptococcus pneumoniae (strain CGSP14) protein is Aspartyl/glutamyl-tRNA(Asn/Gln) amidotransferase subunit B.